A 512-amino-acid chain; its full sequence is Lysine--tRNA ligase (512 aa).

Glu408 and Glu415 together coordinate Mg(2+).

The protein belongs to the class-II aminoacyl-tRNA synthetase family. As to quaternary structure, homodimer. It depends on Mg(2+) as a cofactor.

Its subcellular location is the cytoplasm. The enzyme catalyses tRNA(Lys) + L-lysine + ATP = L-lysyl-tRNA(Lys) + AMP + diphosphate. This Prochlorococcus marinus (strain MIT 9215) protein is Lysine--tRNA ligase.